The sequence spans 157 residues: Crossover junction endodeoxyribonuclease RuvC (157 aa).

Catalysis depends on residues Asp7, Glu67, and Asp140. Positions 7, 67, and 140 each coordinate Mg(2+).

Belongs to the RuvC family. Homodimer which binds Holliday junction (HJ) DNA. The HJ becomes 2-fold symmetrical on binding to RuvC with unstacked arms; it has a different conformation from HJ DNA in complex with RuvA. In the full resolvosome a probable DNA-RuvA(4)-RuvB(12)-RuvC(2) complex forms which resolves the HJ. Mg(2+) serves as cofactor.

Its subcellular location is the cytoplasm. The catalysed reaction is Endonucleolytic cleavage at a junction such as a reciprocal single-stranded crossover between two homologous DNA duplexes (Holliday junction).. In terms of biological role, the RuvA-RuvB-RuvC complex processes Holliday junction (HJ) DNA during genetic recombination and DNA repair. Endonuclease that resolves HJ intermediates. Cleaves cruciform DNA by making single-stranded nicks across the HJ at symmetrical positions within the homologous arms, yielding a 5'-phosphate and a 3'-hydroxyl group; requires a central core of homology in the junction. The consensus cleavage sequence is 5'-(A/T)TT(C/G)-3'. Cleavage occurs on the 3'-side of the TT dinucleotide at the point of strand exchange. HJ branch migration catalyzed by RuvA-RuvB allows RuvC to scan DNA until it finds its consensus sequence, where it cleaves and resolves the cruciform DNA. In Rickettsia africae (strain ESF-5), this protein is Crossover junction endodeoxyribonuclease RuvC.